A 262-amino-acid polypeptide reads, in one-letter code: Large ribosomal subunit protein bL9m (262 aa).

A mitochondrion-targeting transit peptide spans 1–49 (MAASMAPRCSSLLWAGAAWLRQRGIGELLQPRIERSTPGRDFSLSHYQS).

Belongs to the bacterial ribosomal protein bL9 family. Component of the mitochondrial ribosome large subunit (39S) which comprises a 16S rRNA and about 50 distinct proteins.

It is found in the mitochondrion. This is Large ribosomal subunit protein bL9m (Mrpl9) from Rattus norvegicus (Rat).